The chain runs to 436 residues: 3-ketoacyl-CoA thiolase (436 aa).

Cys99 acts as the Acyl-thioester intermediate in catalysis. Residues His392 and Cys422 each act as proton acceptor in the active site.

Belongs to the thiolase-like superfamily. Thiolase family. Heterotetramer of two alpha chains (FadJ) and two beta chains (FadI).

The protein localises to the cytoplasm. The catalysed reaction is an acyl-CoA + acetyl-CoA = a 3-oxoacyl-CoA + CoA. It participates in lipid metabolism; fatty acid beta-oxidation. In terms of biological role, catalyzes the final step of fatty acid oxidation in which acetyl-CoA is released and the CoA ester of a fatty acid two carbons shorter is formed. The chain is 3-ketoacyl-CoA thiolase from Shewanella amazonensis (strain ATCC BAA-1098 / SB2B).